Reading from the N-terminus, the 471-residue chain is Siroheme synthase (471 aa).

The tract at residues 1–203 is precorrin-2 dehydrogenase /sirohydrochlorin ferrochelatase; sequence MEYLPLFADL…GRLEQAEQAL (203 aa). NAD(+) is bound by residues 22-23 and 43-44; these read EV and RA. The residue at position 128 (Ser-128) is a Phosphoserine. Residues 215 to 471 are uroporphyrinogen-III C-methyltransferase; sequence GEVALVGAGP…QKRASVVNLA (257 aa). Pro-224 provides a ligand contact to S-adenosyl-L-methionine. The active-site Proton acceptor is the Asp-247. Lys-269 functions as the Proton donor in the catalytic mechanism. S-adenosyl-L-methionine-binding positions include 300–302, Ile-305, 330–331, Met-382, and Gly-411; these read GGD and TA.

In the N-terminal section; belongs to the precorrin-2 dehydrogenase / sirohydrochlorin ferrochelatase family. The protein in the C-terminal section; belongs to the precorrin methyltransferase family.

It carries out the reaction uroporphyrinogen III + 2 S-adenosyl-L-methionine = precorrin-2 + 2 S-adenosyl-L-homocysteine + H(+). It catalyses the reaction precorrin-2 + NAD(+) = sirohydrochlorin + NADH + 2 H(+). The enzyme catalyses siroheme + 2 H(+) = sirohydrochlorin + Fe(2+). It functions in the pathway cofactor biosynthesis; adenosylcobalamin biosynthesis; precorrin-2 from uroporphyrinogen III: step 1/1. Its pathway is cofactor biosynthesis; adenosylcobalamin biosynthesis; sirohydrochlorin from precorrin-2: step 1/1. It participates in porphyrin-containing compound metabolism; siroheme biosynthesis; precorrin-2 from uroporphyrinogen III: step 1/1. The protein operates within porphyrin-containing compound metabolism; siroheme biosynthesis; siroheme from sirohydrochlorin: step 1/1. It functions in the pathway porphyrin-containing compound metabolism; siroheme biosynthesis; sirohydrochlorin from precorrin-2: step 1/1. In terms of biological role, multifunctional enzyme that catalyzes the SAM-dependent methylations of uroporphyrinogen III at position C-2 and C-7 to form precorrin-2 via precorrin-1. Then it catalyzes the NAD-dependent ring dehydrogenation of precorrin-2 to yield sirohydrochlorin. Finally, it catalyzes the ferrochelation of sirohydrochlorin to yield siroheme. The protein is Siroheme synthase of Sodalis glossinidius (strain morsitans).